The chain runs to 269 residues: Undecaprenyl-diphosphatase (269 aa).

A run of 8 helical transmembrane segments spans residues 3 to 23 (LLIK…LPIS), 41 to 61 (FATM…VFYY), 78 to 98 (GFNL…IGLL), 107 to 127 (LFSP…MIVI), 148 to 167 (SLLI…SRSA), 184 to 204 (AEFS…LSLL), 213 to 233 (LEWQ…LFVV), and 248 to 268 (FAYY…EKIV).

It belongs to the UppP family.

The protein localises to the cell membrane. It catalyses the reaction di-trans,octa-cis-undecaprenyl diphosphate + H2O = di-trans,octa-cis-undecaprenyl phosphate + phosphate + H(+). Catalyzes the dephosphorylation of undecaprenyl diphosphate (UPP). Confers resistance to bacitracin. This chain is Undecaprenyl-diphosphatase, found in Thermoanaerobacter sp. (strain X514).